An 863-amino-acid chain; its full sequence is Autotaxin (863 aa).

Positions Met1–Gly27 are cleaved as a signal peptide. Residues Phe28–Arg35 constitute a propeptide, removed by furin. N-linked (GlcNAc...) asparagine glycosylation is present at Asn54. 2 consecutive SMB domains span residues Ile55–Ala98 and Arg99–His143. Disulfide bonds link Cys59-Cys76, Cys63-Cys94, Cys74-Cys87, Cys80-Cys86, Cys103-Cys120, Cys108-Cys138, Cys118-Cys131, Cys124-Cys130, Cys149-Cys195, and Cys157-Cys351. The short motif at Arg127–Asp129 is the Cell attachment site element. A phosphodiesterase region spans residues Val145 to Pro502. Asp172 and Thr210 together coordinate Zn(2+). Catalysis depends on Thr210, which acts as the Nucleophile. Residues Thr210, Asn231, and Asp312 each coordinate 1-(9Z-octadecenoyl)-sn-glycero-3-phosphate. 1-hexadecanoyl-sn-glycero-3-phosphate-binding residues include Thr210, Asn231, and Asp312. Thr210, Asn231, and Asp312 together coordinate 1-tetradecanoyl-sn-glycerol 3-phosphate. Residues Asp312, His316, Asp359, and His360 each contribute to the Zn(2+) site. 5 disulfides stabilise this stretch: Cys367–Cys469, Cys414–Cys806, Cys567–Cys667, Cys569–Cys652, and Cys775–Cys785. The N-linked (GlcNAc...) asparagine glycan is linked to Asn411. His475 contributes to the Zn(2+) binding site. Residue His475 participates in 1-(9Z-octadecenoyl)-sn-glycero-3-phosphate binding. His475 lines the 1-hexadecanoyl-sn-glycero-3-phosphate pocket. His475 provides a ligand contact to 1-tetradecanoyl-sn-glycerol 3-phosphate. N-linked (GlcNAc...) asparagine glycosylation occurs at Asn525. The nuclease-like domain stretch occupies residues Leu598–Ile863. Ca(2+)-binding residues include Asp740, Asp742, Asp744, Leu746, and Asp748. Asn807 is a glycosylation site (N-linked (GlcNAc...) asparagine). A required for secretion region spans residues Ile830–Thr851.

Belongs to the nucleotide pyrophosphatase/phosphodiesterase family. Zn(2+) is required as a cofactor. Ca(2+) serves as cofactor. Post-translationally, N-glycosylation, but not furin-cleavage, plays a critical role on secretion and on lysoPLD activity. In terms of processing, the interdomain disulfide bond between Cys-414 and Cys-806 is essential for catalytic activity. As to expression, detected in blood plasma (at protein level). Predominantly expressed in brain, placenta, ovary, and small intestine. Expressed in a number of carcinomas such as hepatocellular and prostate carcinoma, neuroblastoma and non-small-cell lung cancer. Expressed in body fluids such as plasma, cerebral spinal fluid (CSF), saliva, follicular and amniotic fluids. Not detected in leukocytes. Isoform 1 is more highly expressed in peripheral tissues than in the central nervous system (CNS). Adipocytes only express isoform 1. Isoform 3 is more highly expressed in the brain than in peripheral tissues.

It is found in the secreted. It carries out the reaction a 1-O-alkyl-sn-glycero-3-phosphoethanolamine + H2O = a 1-O-alkyl-sn-glycero-3-phosphate + ethanolamine + H(+). The catalysed reaction is a 1-acyl-sn-glycero-3-phosphoethanolamine + H2O = a 1-acyl-sn-glycero-3-phosphate + ethanolamine + H(+). The enzyme catalyses 1-(9Z-octadecenoyl)-sn-glycero-3-phosphoethanolamine + H2O = 1-(9Z-octadecenoyl)-sn-glycero-3-phosphate + ethanolamine + H(+). It catalyses the reaction a 1-O-alkyl-sn-glycero-3-phosphocholine + H2O = a 1-O-alkyl-sn-glycero-3-phosphate + choline + H(+). It carries out the reaction 1-O-(9Z-octadecenyl)-sn-glycero-3-phosphocholine + H2O = 1-O-(9Z-octadecenyl)-sn-glycero-3-phosphate + choline + H(+). The catalysed reaction is 1-O-hexadecyl-sn-glycero-3-phosphocholine + H2O = 1-O-hexadecyl-sn-glycero-3-phosphate + choline + H(+). The enzyme catalyses a 1-O-(1Z-alkenyl)-sn-glycero-3-phosphocholine + H2O = a 1-O-(1Z-alkenyl)-sn-glycero-3-phosphate + choline + H(+). It catalyses the reaction a 1-acyl-sn-glycero-3-phosphocholine + H2O = a 1-acyl-sn-glycero-3-phosphate + choline + H(+). It carries out the reaction 1-dodecanoyl-sn-glycero-3-phosphocholine + H2O = 1-dodecanoyl-sn-glycerol 3-phosphate + choline + H(+). The catalysed reaction is 1-(9Z-octadecenoyl)-sn-glycero-3-phosphocholine + H2O = 1-(9Z-octadecenoyl)-sn-glycero-3-phosphate + choline + H(+). The enzyme catalyses 1-tetradecanoyl-sn-glycero-3-phosphocholine + H2O = 1-tetradecanoyl-sn-glycerol 3-phosphate + choline + H(+). It catalyses the reaction 1-decanoyl-sn-glycero-3-phosphocholine + H2O = 1-decanoyl-sn-glycero-3-phosphate + choline + H(+). It carries out the reaction 1-octadecanoyl-sn-glycero-3-phosphocholine + H2O = 1-octadecanoyl-sn-glycero-3-phosphate + choline + H(+). The catalysed reaction is 1-hexadecanoyl-sn-glycero-3-phosphocholine + H2O = 1-hexadecanoyl-sn-glycero-3-phosphate + choline + H(+). The enzyme catalyses 1-hexanoyl-sn-glycero-3-phosphocholine + H2O = 1-hexanoyl-sn-glycero-3-phosphate + choline + H(+). It catalyses the reaction 1-(9Z,12Z)-octadecadienoyl-sn-glycero-3-phosphocholine + H2O = 1-(9Z,12Z)-octadecadienoyl-sn-glycero-3-phosphate + choline + H(+). It carries out the reaction sphing-4-enine-phosphocholine + H2O = sphing-4-enine 1-phosphate + choline + H(+). The catalysed reaction is 1-(5Z,8Z,11Z,14Z-eicosatetraenoyl)-sn-glycero-3-phosphocholine + H2O = 1-(5Z,8Z,11Z,14Z-eicosatetraenoyl)-sn-glycero-3-phosphate + choline + H(+). The enzyme catalyses a 2-acyl-sn-glycero-3-phosphocholine + H2O = a 2-acyl-sn-glycerol 3-phosphate + choline + H(+). It catalyses the reaction a 1,2-diacyl-sn-glycero-3-phosphocholine + H2O = a 1,2-diacyl-sn-glycero-3-phosphate + choline + H(+). It carries out the reaction 1,2-dioctanoyl-sn-glycero-3-phosphocholine + H2O = 1,2-dioctanoyl-sn-glycero-3-phosphate + choline + H(+). The catalysed reaction is 1,2-didecanoyl-sn-glycero-3-phosphocholine + H2O = 1,2-didecanoyl-sn-glycero-3-phosphate + choline + H(+). The enzyme catalyses a 1-acyl-sn-glycero-3-phospho-L-serine + H2O = a 1-acyl-sn-glycero-3-phosphate + L-serine + H(+). It catalyses the reaction 1-(9Z-octadecenoyl)-sn-glycero-3-phospho-L-serine + H2O = 1-(9Z-octadecenoyl)-sn-glycero-3-phosphate + L-serine + H(+). It carries out the reaction a 2-acyl-sn-glycero-3-phospho-L-serine + H2O = a 2-acyl-sn-glycerol 3-phosphate + L-serine + H(+). With respect to regulation, inhibited by lysophosphatidic acid (LPA) and sphingosine-1-phosphate (S1P). Inhibited by EDTA and EGTA. In terms of biological role, secreted lysophospholipase D that hydrolyzes lysophospholipids to produce the signaling molecule lysophosphatidic acid (LPA) in extracellular fluids. Its major substrate is lysophosphatidylcholine. Can also act on sphingosylphosphorylcholine producing sphingosine-1-phosphate, a modulator of cell motility. Can hydrolyze, in vitro, bis-pNPP, to some extent pNP-TMP, and barely ATP. Involved in several motility-related processes such as angiogenesis and neurite outgrowth. Acts as an angiogenic factor by stimulating migration of smooth muscle cells and microtubule formation. Stimulates migration of melanoma cells, probably via a pertussis toxin-sensitive G protein. May have a role in induction of parturition. Possible involvement in cell proliferation and adipose tissue development. Required for LPA production in activated platelets, cleaves the sn-1 lysophospholipids to generate sn-1 lysophosphatidic acids containing predominantly 18:2 and 20:4 fatty acids. Shows a preference for the sn-1 to the sn-2 isomer of 1-O-alkyl-sn-glycero-3-phosphocholine (lyso-PAF). This Homo sapiens (Human) protein is Autotaxin.